A 369-amino-acid chain; its full sequence is 3-dehydroquinate synthase (369 aa).

NAD(+) contacts are provided by residues 72 to 77 (SGEKEK), 130 to 131 (TT), K142, and K151. Residues E184, H247, and H264 each coordinate Zn(2+).

The protein belongs to the sugar phosphate cyclases superfamily. Dehydroquinate synthase family. Co(2+) is required as a cofactor. Zn(2+) serves as cofactor. Requires NAD(+) as cofactor.

Its subcellular location is the cytoplasm. It catalyses the reaction 7-phospho-2-dehydro-3-deoxy-D-arabino-heptonate = 3-dehydroquinate + phosphate. The protein operates within metabolic intermediate biosynthesis; chorismate biosynthesis; chorismate from D-erythrose 4-phosphate and phosphoenolpyruvate: step 2/7. Functionally, catalyzes the conversion of 3-deoxy-D-arabino-heptulosonate 7-phosphate (DAHP) to dehydroquinate (DHQ). This chain is 3-dehydroquinate synthase, found in Bacillus cytotoxicus (strain DSM 22905 / CIP 110041 / 391-98 / NVH 391-98).